We begin with the raw amino-acid sequence, 371 residues long: Geranylgeranyl pyrophosphate synthase paxG (371 aa).

Residues Lys89, Arg92, and His121 each coordinate isopentenyl diphosphate. Asp128 and Asp132 together coordinate Mg(2+). Residue Arg137 participates in dimethylallyl diphosphate binding. An isopentenyl diphosphate-binding site is contributed by Arg138. Dimethylallyl diphosphate is bound by residues Lys215, Thr216, and Gln249. Asp252 serves as a coordination point for Mg(2+). Residues Asn256, Lys266, and Lys276 each coordinate dimethylallyl diphosphate. The Peroxisomal targeting signal signature appears at 369–371 (GRV).

It belongs to the FPP/GGPP synthase family. Mg(2+) is required as a cofactor.

It localises to the peroxisome. It catalyses the reaction isopentenyl diphosphate + dimethylallyl diphosphate = (2E)-geranyl diphosphate + diphosphate. The catalysed reaction is isopentenyl diphosphate + (2E)-geranyl diphosphate = (2E,6E)-farnesyl diphosphate + diphosphate. It carries out the reaction isopentenyl diphosphate + (2E,6E)-farnesyl diphosphate = (2E,6E,10E)-geranylgeranyl diphosphate + diphosphate. It functions in the pathway secondary metabolite biosynthesis. In terms of biological role, geranylgeranyl pyrophosphate synthase; part of the gene cluster that mediates the biosynthesis of paxilline, a mycotoxin that acts as an inhibitor of mammalian maxi-K channels. PaxG, the geranylgeranyl diphosphate (GGPP) synthase is proposed to catalyze the first step in paxilline biosynthesis. Condensation of indole-3-glycerol phosphate with GGPP by paxC then forms 3-geranylgeranylindole (3-GGI), followed by epoxidation and cyclization of this intermediate (by paxM and paxB) to form paspaline. Paspaline is subsequently converted to 13-desoxypaxilline by paxP, the latter being then converted to paxilline by paxQ. Finally paxilline can be mono- and di-prenylated by paxD. The protein is Geranylgeranyl pyrophosphate synthase paxG of Penicillium paxilli.